Here is a 572-residue protein sequence, read N- to C-terminus: Proline--tRNA ligase (572 aa).

This sequence belongs to the class-II aminoacyl-tRNA synthetase family. ProS type 1 subfamily. As to quaternary structure, homodimer.

It is found in the cytoplasm. It catalyses the reaction tRNA(Pro) + L-proline + ATP = L-prolyl-tRNA(Pro) + AMP + diphosphate. Its function is as follows. Catalyzes the attachment of proline to tRNA(Pro) in a two-step reaction: proline is first activated by ATP to form Pro-AMP and then transferred to the acceptor end of tRNA(Pro). As ProRS can inadvertently accommodate and process non-cognate amino acids such as alanine and cysteine, to avoid such errors it has two additional distinct editing activities against alanine. One activity is designated as 'pretransfer' editing and involves the tRNA(Pro)-independent hydrolysis of activated Ala-AMP. The other activity is designated 'posttransfer' editing and involves deacylation of mischarged Ala-tRNA(Pro). The misacylated Cys-tRNA(Pro) is not edited by ProRS. The polypeptide is Proline--tRNA ligase (Escherichia coli O17:K52:H18 (strain UMN026 / ExPEC)).